Here is a 218-residue protein sequence, read N- to C-terminus: Ropporin-1-like protein (218 aa).

One can recognise an RIIa domain in the interval 17–46; the sequence is PELTDILKQFTKAAIRTQPADVLQWSAGYF.

This sequence belongs to the ropporin family. In terms of assembly, component of the axonemal radial spoke complex 1 (RS1), at least composed of spoke head proteins RSPH1, RSPH3, RSPH9 and the cilia-specific component RSPH4A or sperm-specific component RSPH6A, spoke stalk proteins RSPH14, DNAJB13, DYDC1, ROPN1L and NME5, and the anchor protein IQUB. May interact with AKAP3. Interacts with FSCB; the interaction increases upon spermatozoa capacitation conditions. Interacts with CFAP61. Sumoylated, sumoylation decreases upon spermatozoa capacitation conditions.

It localises to the cell projection. The protein localises to the cilium. Its subcellular location is the flagellum. Its function is as follows. Functions as part of axonemal radial spoke complexes that play an important part in the motility of sperm and cilia. Important for male fertility. With ROPN1, involved in fibrous sheath integrity and sperm motility, plays a role in PKA-dependent signaling processes required for spermatozoa capacitation. This Bos taurus (Bovine) protein is Ropporin-1-like protein (ROPN1L).